Consider the following 123-residue polypeptide: Putative iron-sulfur cluster insertion protein ErpA (123 aa).

C51, C115, and C117 together coordinate iron-sulfur cluster.

It belongs to the HesB/IscA family. In terms of assembly, homodimer. Iron-sulfur cluster serves as cofactor.

In terms of biological role, required for insertion of 4Fe-4S clusters. This is Putative iron-sulfur cluster insertion protein ErpA from Bordetella avium (strain 197N).